Consider the following 302-residue polypeptide: UDP-N-acetylenolpyruvoylglucosamine reductase (302 aa).

The region spanning 30–196 is the FAD-binding PCMH-type domain; the sequence is IGGPADLFVE…IAATLEMKKG (167 aa). The active site involves Arg-174. Ser-225 serves as the catalytic Proton donor. Residue Glu-295 is part of the active site.

Belongs to the MurB family. Requires FAD as cofactor.

It localises to the cytoplasm. The catalysed reaction is UDP-N-acetyl-alpha-D-muramate + NADP(+) = UDP-N-acetyl-3-O-(1-carboxyvinyl)-alpha-D-glucosamine + NADPH + H(+). It functions in the pathway cell wall biogenesis; peptidoglycan biosynthesis. In terms of biological role, cell wall formation. This is UDP-N-acetylenolpyruvoylglucosamine reductase from Anoxybacillus flavithermus (strain DSM 21510 / WK1).